We begin with the raw amino-acid sequence, 358 residues long: Septin-12 (358 aa).

The interval 1–25 is disordered; sequence MDPLRRSPSPCLSSQPSSPSTPPCE. Low complexity predominate over residues 6–18; it reads RSPSPCLSSQPSS. In terms of domain architecture, Septin-type G spans 46–317; that stretch reads MGFEFNIMVV…ENYRVIRLNE (272 aa). An interaction with SEPTIN7 region spans residues 46–319; it reads MGFEFNIMVV…YRVIRLNESH (274 aa). The segment at 56 to 63 is G1 motif; the sequence is GQSGLGKS. Residues 56–63, Thr-89, Gly-115, 195–203, Gly-251, and Arg-266 each bind GTP; these read GQSGLGKS and RADSLTMEE. The segment at 112-115 is G3 motif; sequence DTPG. Residues 194–197 form a G4 motif region; it reads ARAD. The tract at residues 258-358 is self-association (via N-terminus) to polymerize octameric septin 12-7-6-2/4-2/4-6-7-12 filaments; sequence VNGRCVLGRK…GAHDDSDDEF (101 aa).

It belongs to the TRAFAC class TrmE-Era-EngA-EngB-Septin-like GTPase superfamily. Septin GTPase family. Septins polymerize into heterooligomeric protein complexes that form filaments, and can associate with cellular membranes, actin filaments and microtubules. GTPase activity is required for filament formation. Interacts with SEPTIN6 and SEPTIN11. Self-associates. Component of a septin core octameric complex consisting of SEPTIN12, SEPTIN7, SEPTIN6 and SEPTIN2 or SEPTIN4 in the order 12-7-6-2-2-6-7-12 or 12-7-6-4-4-6-7-12 and located in the sperm annulus; the octamer polymerizes into filaments via the SEPTIN12 N- and C-termini; the SEPTIN12:SEPTIN7 association is mediated by the respective GTP-binding domains. Interacts with SPAG4 and LMNB1. Associates with alpha- and beta-tubulins. Widely expressed. Expressed in lymph node.

The protein resides in the cytoplasm. It localises to the cytoskeleton. The protein localises to the spindle. Its subcellular location is the nucleus. It is found in the cell projection. The protein resides in the cilium. It localises to the flagellum. Functionally, filament-forming cytoskeletal GTPase. Involved in spermatogenesis. Involved in the morphogenesis of sperm heads and the elongation of sperm tails probably implicating the association with alpha- and beta-tubulins. Forms a filamentous structure with SEPTIN7, SEPTIN6, SEPTIN2 and probably SEPTIN4 at the sperm annulus which is required for the structural integrity and motility of the sperm tail during postmeiotic differentiation. May play a role in cytokinesis (Potential). The protein is Septin-12 of Homo sapiens (Human).